The following is a 250-amino-acid chain: Iron-sulfur assembly protein 1 (250 aa).

Residues alanine 54–tryptophan 89 are disordered. Residues serine 75 to tryptophan 89 are compositionally biased toward low complexity. 3 residues coordinate Fe cation: cysteine 178, cysteine 242, and cysteine 244.

This sequence belongs to the HesB/IscA family.

It is found in the mitochondrion matrix. Functionally, involved in the assembly of mitochondrial and cytoplasmic iron-sulfur proteins. Probably involved in the binding of an intermediate of Fe/S cluster assembly. The polypeptide is Iron-sulfur assembly protein 1 (ISA1) (Saccharomyces cerevisiae (strain ATCC 204508 / S288c) (Baker's yeast)).